Consider the following 328-residue polypeptide: L-lactate dehydrogenase (328 aa).

Residues valine 18, glutamate 39, lysine 46, tyrosine 71, and 85 to 86 each bind NAD(+); that span reads GA. Positions 88 and 94 each coordinate substrate. NAD(+) contacts are provided by residues serine 107, 124–126, and serine 149; that span reads AAN. 126-129 provides a ligand contact to substrate; sequence NPVD. 154-157 lines the substrate pocket; that stretch reads DSAR. Arginine 159 and histidine 174 together coordinate beta-D-fructose 1,6-bisphosphate. The active-site Proton acceptor is histidine 181. Phosphotyrosine is present on tyrosine 226. A substrate-binding site is contributed by threonine 235.

This sequence belongs to the LDH/MDH superfamily. LDH family. As to quaternary structure, homotetramer.

The protein localises to the cytoplasm. The enzyme catalyses (S)-lactate + NAD(+) = pyruvate + NADH + H(+). It participates in fermentation; pyruvate fermentation to lactate; (S)-lactate from pyruvate: step 1/1. Allosterically activated by fructose 1,6-bisphosphate (FBP). In terms of biological role, catalyzes the conversion of lactate to pyruvate. This Streptococcus pneumoniae (strain ATCC BAA-255 / R6) protein is L-lactate dehydrogenase.